Here is a 686-residue protein sequence, read N- to C-terminus: Phosphomethylpyrimidine synthase (686 aa).

Substrate contacts are provided by residues Asn-235, Met-264, Tyr-293, His-329, 349–351 (SRG), 390–393 (DGMR), and Glu-429. Residue His-433 coordinates Zn(2+). Residue Tyr-456 participates in substrate binding. Zn(2+) is bound at residue His-497. The [4Fe-4S] cluster site is built by Cys-577, Cys-580, and Cys-585. Positions 659–686 (IDSSGINDNKNDQQDASVVRVPSLEIEG) are disordered.

This sequence belongs to the ThiC family. As to quaternary structure, homodimer. It depends on [4Fe-4S] cluster as a cofactor.

It catalyses the reaction 5-amino-1-(5-phospho-beta-D-ribosyl)imidazole + S-adenosyl-L-methionine = 4-amino-2-methyl-5-(phosphooxymethyl)pyrimidine + CO + 5'-deoxyadenosine + formate + L-methionine + 3 H(+). It functions in the pathway cofactor biosynthesis; thiamine diphosphate biosynthesis. In terms of biological role, catalyzes the synthesis of the hydroxymethylpyrimidine phosphate (HMP-P) moiety of thiamine from aminoimidazole ribotide (AIR) in a radical S-adenosyl-L-methionine (SAM)-dependent reaction. The sequence is that of Phosphomethylpyrimidine synthase from Shewanella denitrificans (strain OS217 / ATCC BAA-1090 / DSM 15013).